The following is a 93-amino-acid chain: YcgL domain-containing protein Swoo_2115 (93 aa).

The region spanning 1–85 is the YcgL domain; it reads MICAVYKSRR…PVVNLLEEHK (85 aa).

This Shewanella woodyi (strain ATCC 51908 / MS32) protein is YcgL domain-containing protein Swoo_2115.